A 227-amino-acid polypeptide reads, in one-letter code: Isopentenyl-diphosphate Delta-isomerase 1 (227 aa).

Lysine 36 contacts substrate. Residues histidine 40 and histidine 51 each contribute to the Mg(2+) site. Residues 49–199 (LLHRAFSVFL…EIKITPWFQI (151 aa)) enclose the Nudix hydrolase domain. Arginine 70 and lysine 74 together coordinate substrate. The Proton acceptor role is filled by cysteine 86. Residue serine 87 participates in substrate binding. Mg(2+) contacts are provided by glutamate 146 and glutamate 148. Glutamate 148 is a catalytic residue. Lysine 176 carries the N6-acetyllysine modification.

It belongs to the IPP isomerase type 1 family. In terms of assembly, monomer. It depends on Mg(2+) as a cofactor.

The protein resides in the peroxisome. It carries out the reaction isopentenyl diphosphate = dimethylallyl diphosphate. The protein operates within isoprenoid biosynthesis; dimethylallyl diphosphate biosynthesis; dimethylallyl diphosphate from isopentenyl diphosphate: step 1/1. Functionally, catalyzes the 1,3-allylic rearrangement of the homoallylic substrate isopentenyl (IPP) to its highly electrophilic allylic isomer, dimethylallyl diphosphate (DMAPP). In Bos taurus (Bovine), this protein is Isopentenyl-diphosphate Delta-isomerase 1 (IDI1).